The following is a 167-amino-acid chain: Leptin (167 aa).

Residues 1 to 21 (MRCGPLYRFLWLWPYLSYVEA) form the signal peptide. A disulfide bridge connects residues Cys-117 and Cys-167.

This sequence belongs to the leptin family.

It is found in the secreted. Functionally, key player in the regulation of energy balance and body weight control. Once released into the circulation, has central and peripheral effects by binding LEPR, found in many tissues, which results in the activation of several major signaling pathways. In the hypothalamus, acts as an appetite-regulating factor that induces a decrease in food intake and an increase in energy consumption by inducing anorexinogenic factors and suppressing orexigenic neuropeptides, also regulates bone mass and secretion of hypothalamo-pituitary-adrenal hormones. In the periphery, increases basal metabolism, influences reproductive function, regulates pancreatic beta-cell function and insulin secretion, is pro-angiogenic for endothelial cell and affects innate and adaptive immunity. In the arcuate nucleus of the hypothalamus, activates by depolarization POMC neurons inducing FOS and SOCS3 expression to release anorexigenic peptides and inhibits by hyperpolarization NPY neurons inducing SOCS3 with a consequent reduction on release of orexigenic peptides. In addition to its known satiety inducing effect, has a modulatory role in nutrient absorption. In the intestine, reduces glucose absorption by enterocytes by activating PKC and leading to a sequential activation of p38, PI3K and ERK signaling pathways which exerts an inhibitory effect on glucose absorption. Acts as a growth factor on certain tissues, through the activation of different signaling pathways increases expression of genes involved in cell cycle regulation such as CCND1, via JAK2-STAT3 pathway, or VEGFA, via MAPK1/3 and PI3K-AKT1 pathways. May also play an apoptotic role via JAK2-STAT3 pathway and up-regulation of BIRC5 expression. Pro-angiogenic, has mitogenic activity on vascular endothelial cells and plays a role in matrix remodeling by regulating the expression of matrix metalloproteinases (MMPs) and tissue inhibitors of metalloproteinases (TIMPs). In innate immunity, modulates the activity and function of neutrophils by increasing chemotaxis and the secretion of oxygen radicals. Increases phagocytosis by macrophages and enhances secretion of pro-inflammatory mediators. Increases cytotoxic ability of NK cells. Plays a pro-inflammatory role, in synergy with IL1B, by inducing NOS2 which promotes the production of IL6, IL8 and Prostaglandin E2, through a signaling pathway that involves JAK2, PI3K, MAP2K1/MEK1 and MAPK14/p38. In adaptive immunity, promotes the switch of memory T-cells towards T helper-1 cell immune responses. Increases CD4(+)CD25(-) T-cell proliferation and reduces autophagy during TCR (T-cell receptor) stimulation, through MTOR signaling pathway activation and BCL2 up-regulation. The protein is Leptin (LEP) of Capra hircus (Goat).